The following is a 312-amino-acid chain: uncharacterized protein (312 aa).

Position 112 to 118 (112 to 118 (LIGLPMV)) interacts with ATP.

Belongs to the MurCDEF family.

This is an uncharacterized protein from Methanothermobacter thermautotrophicus (strain ATCC 29096 / DSM 1053 / JCM 10044 / NBRC 100330 / Delta H) (Methanobacterium thermoautotrophicum).